A 248-amino-acid polypeptide reads, in one-letter code: 2,3-bisphosphoglycerate-dependent phosphoglycerate mutase (248 aa).

Residues 8–15 (RHGESLWN), 21–22 (TG), arginine 60, 87–90 (EKHY), lysine 98, 114–115 (RR), and 183–184 (GN) contribute to the substrate site. Histidine 9 acts as the Tele-phosphohistidine intermediate in catalysis. Glutamate 87 serves as the catalytic Proton donor/acceptor.

Belongs to the phosphoglycerate mutase family. BPG-dependent PGAM subfamily.

The enzyme catalyses (2R)-2-phosphoglycerate = (2R)-3-phosphoglycerate. It participates in carbohydrate degradation; glycolysis; pyruvate from D-glyceraldehyde 3-phosphate: step 3/5. In terms of biological role, catalyzes the interconversion of 2-phosphoglycerate and 3-phosphoglycerate. This Porphyromonas gingivalis (strain ATCC 33277 / DSM 20709 / CIP 103683 / JCM 12257 / NCTC 11834 / 2561) protein is 2,3-bisphosphoglycerate-dependent phosphoglycerate mutase.